The primary structure comprises 363 residues: Fructose-bisphosphate aldolase C (363 aa).

Tyrosine 5 carries the post-translational modification Phosphotyrosine. Residues serine 36, serine 39, and serine 45 each carry the phosphoserine modification. Arginine 56 contacts substrate. Lysine 111 carries the N6-acetyllysine modification. Lysine 147 contributes to the substrate binding site. Glutamate 188 (proton acceptor) is an active-site residue. The active-site Schiff-base intermediate with dihydroxyacetone-P is lysine 230.

This sequence belongs to the class I fructose-bisphosphate aldolase family. In terms of assembly, homotetramer. Interacts with ATP6V1E1. As to expression, expressed exclusively in Purkinje cells in bands running from anterior to posterior across most of the cerebellum. Expressed at higher levels in the brains of BSE-infected animals.

The enzyme catalyses beta-D-fructose 1,6-bisphosphate = D-glyceraldehyde 3-phosphate + dihydroxyacetone phosphate. It functions in the pathway carbohydrate degradation; glycolysis; D-glyceraldehyde 3-phosphate and glycerone phosphate from D-glucose: step 4/4. The polypeptide is Fructose-bisphosphate aldolase C (Aldoc) (Mus musculus (Mouse)).